The chain runs to 307 residues: Oxygen-dependent coproporphyrinogen-III oxidase (307 aa).

Residue serine 99 coordinates substrate. Positions 103 and 113 each coordinate a divalent metal cation. Catalysis depends on histidine 113, which acts as the Proton donor. 115 to 117 contributes to the substrate binding site; sequence NVR. A divalent metal cation is bound by residues histidine 152 and histidine 182. The tract at residues 247-282 is important for dimerization; it reads YVEFNLVFDRGTLFGLQSGGRTESILLSMPPTAGWR. 265–267 contributes to the substrate binding site; sequence GGR.

It belongs to the aerobic coproporphyrinogen-III oxidase family. In terms of assembly, homodimer. The cofactor is a divalent metal cation.

Its subcellular location is the cytoplasm. The enzyme catalyses coproporphyrinogen III + O2 + 2 H(+) = protoporphyrinogen IX + 2 CO2 + 2 H2O. Its pathway is porphyrin-containing compound metabolism; protoporphyrin-IX biosynthesis; protoporphyrinogen-IX from coproporphyrinogen-III (O2 route): step 1/1. Involved in the heme biosynthesis. Catalyzes the aerobic oxidative decarboxylation of propionate groups of rings A and B of coproporphyrinogen-III to yield the vinyl groups in protoporphyrinogen-IX. This Burkholderia pseudomallei (strain 1106a) protein is Oxygen-dependent coproporphyrinogen-III oxidase.